Reading from the N-terminus, the 248-residue chain is 5'-nucleotidase SurE (248 aa).

Positions 8, 9, 39, and 91 each coordinate a divalent metal cation.

The protein belongs to the SurE nucleotidase family. Requires a divalent metal cation as cofactor.

It localises to the cytoplasm. The catalysed reaction is a ribonucleoside 5'-phosphate + H2O = a ribonucleoside + phosphate. In terms of biological role, nucleotidase that shows phosphatase activity on nucleoside 5'-monophosphates. The chain is 5'-nucleotidase SurE from Geobacter sp. (strain M21).